The following is a 494-amino-acid chain: Lipopolysaccharide core galacturonosyltransferase RgtB (494 aa).

The next 10 membrane-spanning stretches (helical) occupy residues 9–29 (ISWIFALLAAYFVLQVGVRLA), 74–94 (LTALSIVKNLLLFISYLLYGL), 104–124 (ALVAIATLGLLTIPQMAFEMQ), 127–147 (LTHTVAVFFSASIFFYGFIRS), 156–176 (YLIAGIGIGFGLLAKYNFAIL), 197–217 (WRLGLTAAVALVITLPHLFWL), 251–271 (LALAIISFAALTVAVFAIVFG), 291–311 (MMLVFLAGILLLIVFGGAAGI), 316–336 (LVPMLFILPLYFCLKIEAAGV), and 345–365 (FIPVVAVIMIGVPAALYGSVA).

Belongs to the glycosyltransferase 83 family.

It is found in the cell inner membrane. It functions in the pathway bacterial outer membrane biogenesis; LPS core biosynthesis. Involved in the modification of the lipopolysaccharide (LPS) inner core. Catalyzes the transfer of a galacturonic acid (GalA) residue to the 5-position of the outer Kdo (3-deoxy-D-manno-octulosonic acid) residue of the LPS inner core, using dodecaprenyl phosphate-GalA as the donor substrate. Acts after the other GalA transferase RgtA. The sequence is that of Lipopolysaccharide core galacturonosyltransferase RgtB from Rhizobium johnstonii (strain DSM 114642 / LMG 32736 / 3841) (Rhizobium leguminosarum bv. viciae).